Consider the following 211-residue polypeptide: Probable GTP-binding protein EngB (211 aa).

Positions 22-195 (PFPEVAFAGK…WQLIDSYVLP (174 aa)) constitute an EngB-type G domain. Residues 30 to 37 (GKSNVGKS), 57 to 61 (GKTQT), 75 to 78 (DLPG), 142 to 145 (TKLD), and 174 to 176 (FSS) each bind GTP. Positions 37 and 59 each coordinate Mg(2+).

The protein belongs to the TRAFAC class TrmE-Era-EngA-EngB-Septin-like GTPase superfamily. EngB GTPase family. Mg(2+) is required as a cofactor.

Functionally, necessary for normal cell division and for the maintenance of normal septation. The chain is Probable GTP-binding protein EngB from Lachnospira eligens (strain ATCC 27750 / DSM 3376 / VPI C15-48 / C15-B4) (Eubacterium eligens).